The following is a 148-amino-acid chain: Large ribosomal subunit protein uL15 (148 aa).

Basic and acidic residues predominate over residues 1–40 (MADILQMHDLKPAPGANKDRIRVGRGEGSKGKTSGRGDKG). Residues 1–47 (MADILQMHDLKPAPGANKDRIRVGRGEGSKGKTSGRGDKGTKKRYQV) form a disordered region.

The protein belongs to the universal ribosomal protein uL15 family. Part of the 50S ribosomal subunit.

Its function is as follows. Binds to the 23S rRNA. This is Large ribosomal subunit protein uL15 from Bifidobacterium adolescentis (strain ATCC 15703 / DSM 20083 / NCTC 11814 / E194a).